Reading from the N-terminus, the 396-residue chain is Period circadian protein (396 aa).

Disordered stretches follow at residues 27 to 120 (VTAP…APPV), 167 to 188 (SGPG…WEGE), 253 to 275 (GGNG…QYTQ), and 333 to 362 (SPSS…TSQA). Over residues 93 to 114 (GTSGTGNSGDGGGGGGANGTGS) the composition is skewed to gly residues. Residues 253–262 (GGNGNVGSGN) are compositionally biased toward gly residues. The segment covering 333-342 (SPSSTNTNPN) has biased composition (low complexity).

Forms a heterodimer with timeless (TIM); the complex then translocates into the nucleus. Post-translationally, phosphorylated with a circadian rhythmicity, probably by the double-time protein (dbt). Phosphorylation could be implicated in the stability of per monomer and in the formation of heterodimer per-tim.

The protein localises to the nucleus. It is found in the cytoplasm. The protein resides in the perinuclear region. Its function is as follows. Essential for biological clock functions. Determines the period length of circadian and ultradian rhythms; an increase in PER dosage leads to shortened circadian rhythms and a decrease leads to lengthened circadian rhythms. Essential for the circadian rhythmicity of locomotor activity, eclosion behavior, and for the rhythmic component of the male courtship song that originates in the thoracic nervous system. The biological cycle depends on the rhythmic formation and nuclear localization of the TIM-PER complex. Light induces the degradation of TIM, which promotes elimination of PER. Nuclear activity of the heterodimer coordinatively regulates PER and TIM transcription through a negative feedback loop. Behaves as a negative element in circadian transcriptional loop. Does not appear to bind DNA, suggesting indirect transcriptional inhibition. This Drosophila paulistorum (Fruit fly) protein is Period circadian protein (per).